An 87-amino-acid polypeptide reads, in one-letter code: UPF0473 protein Daud_0916 (87 aa).

Belongs to the UPF0473 family.

This chain is UPF0473 protein Daud_0916, found in Desulforudis audaxviator (strain MP104C).